Here is a 601-residue protein sequence, read N- to C-terminus: Trehalose synthase/amylase TreS (601 aa).

Positions 1–21 are disordered; sequence MNEAEHSVEHPPVQGSHVEGG. Aspartate 98 contributes to the substrate binding site. Asparagine 140 is a binding site for Ca(2+). 2 residues coordinate substrate: histidine 141 and glutamine 206. Aspartate 208 contributes to the Ca(2+) binding site. A substrate-binding site is contributed by arginine 236. Residue aspartate 238 is the Nucleophile of the active site. Ca(2+) is bound by residues tyrosine 242, leucine 243, and glutamate 245. The Proton donor role is filled by glutamate 280. 2 residues coordinate substrate: histidine 349 and aspartate 350.

The protein belongs to the glycosyl hydrolase 13 family. TreS subfamily. In terms of assembly, homohexamer.

It catalyses the reaction D-maltose = alpha,alpha-trehalose. The enzyme catalyses Endohydrolysis of (1-&gt;4)-alpha-D-glucosidic linkages in polysaccharides containing three or more (1-&gt;4)-alpha-linked D-glucose units.. Its pathway is glycan biosynthesis; glycogen biosynthesis. It functions in the pathway capsule biogenesis; capsule polysaccharide biosynthesis. In terms of biological role, catalyzes the reversible interconversion of maltose and trehalose by transglucosylation. Also displays amylase activity, catalyzing the endohydrolysis of (1-&gt;4)-alpha-D-glucosidic linkages in glycogen and maltooligosaccharides such as maltoheptaose, to produce maltose which then can be converted to trehalose. TreS plays a key role in the utilization of trehalose for the production of glycogen and alpha-glucan via the TreS-Pep2 branch involved in the biosynthesis of maltose-1-phosphate (M1P). Might also function as a sensor and/or regulator of trehalose levels within the cell. Thus, when trehalose levels in the cell become dangerously low, TreS could expedite the conversion of glycogen to maltose via its amylase activity and then convert the maltose to trehalose; but this enzyme also could expedite or promote the conversion of trehalose to glycogen when cytoplasmic trehalose levels become too high. The protein is Trehalose synthase/amylase TreS of Mycobacterium tuberculosis (strain CDC 1551 / Oshkosh).